Reading from the N-terminus, the 194-residue chain is Probable calcium-binding protein CML45 (194 aa).

Over residues asparagine 52 to glutamine 63 the composition is skewed to basic and acidic residues. Residues asparagine 52–isoleucine 81 form a disordered region. Acidic residues predominate over residues glutamate 64–isoleucine 81. EF-hand domains follow at residues aspartate 76–phenylalanine 98, alanine 122–lysine 157, and serine 160–tyrosine 194. Positions 135, 137, 139, 146, 173, 175, 177, 179, and 184 each coordinate Ca(2+).

Its function is as follows. Potential calcium sensor. This chain is Probable calcium-binding protein CML45, found in Arabidopsis thaliana (Mouse-ear cress).